We begin with the raw amino-acid sequence, 310 residues long: Ribosomal RNA small subunit methyltransferase H (310 aa).

Residues 32–34 (GGH), Asp-52, Phe-79, Asp-100, and Gln-107 each bind S-adenosyl-L-methionine.

The protein belongs to the methyltransferase superfamily. RsmH family.

It localises to the cytoplasm. It catalyses the reaction cytidine(1402) in 16S rRNA + S-adenosyl-L-methionine = N(4)-methylcytidine(1402) in 16S rRNA + S-adenosyl-L-homocysteine + H(+). Functionally, specifically methylates the N4 position of cytidine in position 1402 (C1402) of 16S rRNA. The chain is Ribosomal RNA small subunit methyltransferase H from Bacillus mycoides (strain KBAB4) (Bacillus weihenstephanensis).